The sequence spans 278 residues: Gasdermin-like protein het-Q1 (278 aa).

This sequence belongs to the gasdermin family. Homooligomer; forms a homooligomeric ring-shaped pore complex when inserted in the membrane. In terms of processing, the precursor form is cleaved by het-Q2, generating the pore-forming protein (Gasdermin-like protein het-Q1, N-terminal).

The protein localises to the cell membrane. Functionally, gasdermin-like protein involved in heterokaryon incompatibility, a process that ensures that during spontaneous vegetative cell fusion, only compatible cells from the same colony survive (non-self-recognition). In P.anserina, the het-q locus exists as 2 incompatible alleles, het-Q1 (this entry) and het-Q2 (AC P0DW09). This form constitutes the precursor of the pore-forming protein: during the allorecognition process, it is cleaved by het-Q2, releasing the N-terminal moiety (Gasdermin-like protein het-Q1, N-terminal) that binds to membranes and forms pores, triggering cell death. In terms of biological role, pore-forming protein that causes membrane permeabilization and cell death. Released upon cleavage and maturation by het-Q2 and binds to membrane inner leaflet lipids. Homooligomerizes within the membrane and forms pores of 10-15 nanometers (nm) of inner diameter, triggering cell death. The protein is Gasdermin-like protein het-Q1 of Podospora anserina (strain S / ATCC MYA-4624 / DSM 980 / FGSC 10383) (Pleurage anserina).